The following is a 284-amino-acid chain: tRNA pseudouridine synthase A (284 aa).

Catalysis depends on D62, which acts as the Nucleophile. Residue Y120 coordinates substrate.

It belongs to the tRNA pseudouridine synthase TruA family. Homodimer.

The catalysed reaction is uridine(38/39/40) in tRNA = pseudouridine(38/39/40) in tRNA. Functionally, formation of pseudouridine at positions 38, 39 and 40 in the anticodon stem and loop of transfer RNAs. The protein is tRNA pseudouridine synthase A of Thermosynechococcus vestitus (strain NIES-2133 / IAM M-273 / BP-1).